A 209-amino-acid chain; its full sequence is UPF0174 protein jhp_1493 (209 aa).

Belongs to the UPF0174 family.

The chain is UPF0174 protein jhp_1493 from Helicobacter pylori (strain J99 / ATCC 700824) (Campylobacter pylori J99).